Here is a 246-residue protein sequence, read N- to C-terminus: Histone H1 (246 aa).

2 disordered regions span residues 1–51 (MATD…PTHL) and 105–246 (GGKL…KAKK). A compositionally biased stretch (low complexity) spans 9 to 34 (PAPLVDAAPEAPADAPAAPAADANAA). Positions 35 to 47 (KAKKATAPKKRAS) are enriched in basic residues. The region spanning 49–119 (THLPYAEMVS…KVKNSYKLSS (71 aa)) is the H15 domain. 2 stretches are compositionally biased toward basic residues: residues 129–189 (AAPK…KAKP) and 198–208 (PLAKKAGRAKA). The segment covering 224-235 (KKAAPSKKAATP) has biased composition (low complexity).

It belongs to the histone H1/H5 family.

The protein localises to the nucleus. The protein resides in the chromosome. Functionally, histones H1 are necessary for the condensation of nucleosome chains into higher-order structures. In Zea mays (Maize), this protein is Histone H1.